Consider the following 154-residue polypeptide: 3-hydroxyacyl-[acyl-carrier-protein] dehydratase FabZ (154 aa).

His57 is an active-site residue.

It belongs to the thioester dehydratase family. FabZ subfamily.

It is found in the cytoplasm. The catalysed reaction is a (3R)-hydroxyacyl-[ACP] = a (2E)-enoyl-[ACP] + H2O. In terms of biological role, involved in unsaturated fatty acids biosynthesis. Catalyzes the dehydration of short chain beta-hydroxyacyl-ACPs and long chain saturated and unsaturated beta-hydroxyacyl-ACPs. The chain is 3-hydroxyacyl-[acyl-carrier-protein] dehydratase FabZ from Sinorhizobium fredii (strain NBRC 101917 / NGR234).